The primary structure comprises 749 residues: MQSLLDGHHHQLPSLLQQHHNGHHLLDQHQQHQHQLPPQATTTSESDGRAPRDELEMSKSGGSDNLESGGGGGGGGSGDDQDPNQRPRKKRYHRHTQHQIQELEAFFKECPHPDDKQRKELSRELGLEPLQVKFWFQNKRTQMKTQHERHENNALRAENEKLRAENMRYKEALANASCPNCGGPAAIGEMSFDEHHLRLENARLRDEIDRISAIAAKYVGKPAAAVSAAYPPLPPSNRSPLDHMGIPGAGADVFGADFDKPLVIELAVAAMEELVRMAQLGEPLWAPALGGEALGEEEYARTFPRGLGPKSPELRSEASRETAVVIMNHVSLVEMLMDVGQWTALFSSIVSRAATLEVLSTGVAGNHNGALQLMSAEFQMPSPLVPTRETQFLRYCKQHPDGTWAVVDVSLDGLRAGAGGGCQPAAARGHRRRPSGCLIQEMPNGYSKVTWVEHVEADDQMVHNLYKPVVNSGMAFGARRWVATLERQCERLASAMASNVASSGDAGVITTSEGRRSMLKLAERMVASFCGGVTASTTHQWTTLSGSGAEDVRVMTRKSVDDPGRPPGIVLNAATSFWLPVPPSRVFDFLRDDSTRSEWDILSNGGVVQEMAHIANGRDHGNAVSLLRVNNANSNQSNMLILQECCTDATGSYVIYAPVDVVAMNVVLNGGDPDYVALLPSGFAILPDGPDGGGGSLLTVAFQILVDSVPTAKLSLGSVATVNSLIACTVERIKAAITGDNGVAPPCPR.

Positions 26–98 (LDQHQQHQHQ…KKRYHRHTQH (73 aa)) are disordered. The segment covering 46–57 (SDGRAPRDELEM) has biased composition (basic and acidic residues). Over residues 68-78 (SGGGGGGGGSG) the composition is skewed to gly residues. Residues 86 to 97 (RPRKKRYHRHTQ) show a composition bias toward basic residues. The segment at residues 88 to 147 (RKKRYHRHTQHQIQELEAFFKECPHPDDKQRKELSRELGLEPLQVKFWFQNKRTQMKTQH) is a DNA-binding region (homeobox). A coiled-coil region spans residues 137–218 (QNKRTQMKTQ…DRISAIAAKY (82 aa)). Residues 256 to 494 (ADFDKPLVIE…LERQCERLAS (239 aa)) form the START domain.

The protein belongs to the HD-ZIP homeobox family. Class IV subfamily.

The protein resides in the nucleus. In terms of biological role, probable transcription factor. This chain is Homeobox-leucine zipper protein ROC7 (ROC7), found in Oryza sativa subsp. indica (Rice).